A 237-amino-acid chain; its full sequence is Ribosomal RNA small subunit methyltransferase G (237 aa).

Residues glycine 78, phenylalanine 83, 129–130, and arginine 148 each bind S-adenosyl-L-methionine; that span reads AE. The interval 218–237 is disordered; it reads KKETPNKYPRKAGMPNKRPL.

It belongs to the methyltransferase superfamily. RNA methyltransferase RsmG family.

It is found in the cytoplasm. In terms of biological role, specifically methylates the N7 position of a guanine in 16S rRNA. The protein is Ribosomal RNA small subunit methyltransferase G of Streptococcus pneumoniae serotype 19F (strain G54).